Reading from the N-terminus, the 173-residue chain is NADH-ubiquinone oxidoreductase chain 6 (173 aa).

The next 5 membrane-spanning stretches (helical) occupy residues methionine 1 to serine 21, proline 25 to tryptophan 45, leucine 53 to leucine 73, leucine 82 to leucine 102, and glycine 142 to valine 162.

This sequence belongs to the complex I subunit 6 family.

It is found in the mitochondrion membrane. It catalyses the reaction a ubiquinone + NADH + 5 H(+)(in) = a ubiquinol + NAD(+) + 4 H(+)(out). Functionally, core subunit of the mitochondrial membrane respiratory chain NADH dehydrogenase (Complex I) that is believed to belong to the minimal assembly required for catalysis. Complex I functions in the transfer of electrons from NADH to the respiratory chain. The immediate electron acceptor for the enzyme is believed to be ubiquinone. In Tetraodon nigroviridis (Spotted green pufferfish), this protein is NADH-ubiquinone oxidoreductase chain 6 (MT-ND6).